We begin with the raw amino-acid sequence, 252 residues long: 3-dehydroquinate dehydratase (252 aa).

Residues 46–48 (EWR) and R82 contribute to the 3-dehydroquinate site. H143 acts as the Proton donor/acceptor in catalysis. K170 (schiff-base intermediate with substrate) is an active-site residue. 3 residues coordinate 3-dehydroquinate: R212, S231, and Q235.

The protein belongs to the type-I 3-dehydroquinase family. In terms of assembly, homodimer.

The enzyme catalyses 3-dehydroquinate = 3-dehydroshikimate + H2O. The protein operates within metabolic intermediate biosynthesis; chorismate biosynthesis; chorismate from D-erythrose 4-phosphate and phosphoenolpyruvate: step 3/7. Involved in the third step of the chorismate pathway, which leads to the biosynthesis of aromatic amino acids. Catalyzes the cis-dehydration of 3-dehydroquinate (DHQ) and introduces the first double bond of the aromatic ring to yield 3-dehydroshikimate. The protein is 3-dehydroquinate dehydratase of Listeria monocytogenes serotype 4b (strain CLIP80459).